The chain runs to 381 residues: Carboxylesterase 5A (381 aa).

Serine 108 functions as the Acyl-ester intermediate in the catalytic mechanism. An intrachain disulfide couples cysteine 162 to cysteine 173. Residue asparagine 163 is glycosylated (N-linked (GlcNAc...) asparagine). The Charge relay system role is filled by glutamate 227. An N-linked (GlcNAc...) asparagine glycan is attached at asparagine 245. Catalysis depends on histidine 336, which acts as the Charge relay system.

Belongs to the type-B carboxylesterase/lipase family. In terms of assembly, component of a epididymal complex at least composed of soluble form of prion protein PRNP, CLU, BPI, CES5A, MANBA and GLB1. In terms of processing, N-glycosylated. As to expression, detected in corpus and cauda epididymal fluid. Present in seminal fluid but not found to be associated with sperm (at protein level). Not expressed in other tissues.

The protein localises to the secreted. The catalysed reaction is a carboxylic ester + H2O = an alcohol + a carboxylate + H(+). Involved in the detoxification of xenobiotics and in the activation of ester and amide prodrugs. In Ovis aries (Sheep), this protein is Carboxylesterase 5A (CES5A).